A 146-amino-acid chain; its full sequence is D-aminoacyl-tRNA deacylase (146 aa).

The short motif at 138–139 is the Gly-cisPro motif, important for rejection of L-amino acids element; the sequence is GP.

It belongs to the DTD family. Homodimer.

The protein resides in the cytoplasm. The enzyme catalyses glycyl-tRNA(Ala) + H2O = tRNA(Ala) + glycine + H(+). It catalyses the reaction a D-aminoacyl-tRNA + H2O = a tRNA + a D-alpha-amino acid + H(+). Functionally, an aminoacyl-tRNA editing enzyme that deacylates mischarged D-aminoacyl-tRNAs. Also deacylates mischarged glycyl-tRNA(Ala), protecting cells against glycine mischarging by AlaRS. Acts via tRNA-based rather than protein-based catalysis; rejects L-amino acids rather than detecting D-amino acids in the active site. By recycling D-aminoacyl-tRNA to D-amino acids and free tRNA molecules, this enzyme counteracts the toxicity associated with the formation of D-aminoacyl-tRNA entities in vivo and helps enforce protein L-homochirality. The sequence is that of D-aminoacyl-tRNA deacylase from Stenotrophomonas maltophilia (strain R551-3).